We begin with the raw amino-acid sequence, 249 residues long: uncharacterized protein (249 aa).

The chain crosses the membrane as a helical span at residues 3–23; that stretch reads WYWIGLLIVVVLFLLSAVRIV.

It belongs to the band 7/mec-2 family.

The protein resides in the membrane. This is an uncharacterized protein from Archaeoglobus fulgidus (strain ATCC 49558 / DSM 4304 / JCM 9628 / NBRC 100126 / VC-16).